A 116-amino-acid polypeptide reads, in one-letter code: Iron-sulfur cluster insertion protein ErpA (116 aa).

Iron-sulfur cluster contacts are provided by C44, C108, and C110.

Belongs to the HesB/IscA family. Homodimer. Iron-sulfur cluster serves as cofactor.

Functionally, required for insertion of 4Fe-4S clusters for at least IspG. The polypeptide is Iron-sulfur cluster insertion protein ErpA (Shewanella oneidensis (strain ATCC 700550 / JCM 31522 / CIP 106686 / LMG 19005 / NCIMB 14063 / MR-1)).